We begin with the raw amino-acid sequence, 139 residues long: ATP synthase epsilon chain, chloroplastic (139 aa).

The protein belongs to the ATPase epsilon chain family. As to quaternary structure, F-type ATPases have 2 components, CF(1) - the catalytic core - and CF(0) - the membrane proton channel. CF(1) has five subunits: alpha(3), beta(3), gamma(1), delta(1), epsilon(1). CF(0) has three main subunits: a, b and c.

The protein localises to the plastid. The protein resides in the chloroplast thylakoid membrane. Functionally, produces ATP from ADP in the presence of a proton gradient across the membrane. The polypeptide is ATP synthase epsilon chain, chloroplastic (Dictyota dichotoma).